Consider the following 180-residue polypeptide: tRNA (cytidine(56)-2'-O)-methyltransferase (180 aa).

S-adenosyl-L-methionine contacts are provided by residues leucine 84 and 112-116 (GAEKV).

It belongs to the aTrm56 family. Homodimer.

It localises to the cytoplasm. The catalysed reaction is cytidine(56) in tRNA + S-adenosyl-L-methionine = 2'-O-methylcytidine(56) in tRNA + S-adenosyl-L-homocysteine + H(+). In terms of biological role, specifically catalyzes the AdoMet-dependent 2'-O-ribose methylation of cytidine at position 56 in tRNAs. In Natronomonas pharaonis (strain ATCC 35678 / DSM 2160 / CIP 103997 / JCM 8858 / NBRC 14720 / NCIMB 2260 / Gabara) (Halobacterium pharaonis), this protein is tRNA (cytidine(56)-2'-O)-methyltransferase.